Consider the following 270-residue polypeptide: Proteasome subunit beta (270 aa).

A propeptide spans 1 to 47 (MSNRGRLGDAFLRPGSSSFLDFLSDHAPELLPGRSAAAGNAPLAPHA) (removed in mature form; by autocatalysis). The active-site Nucleophile is the Thr48.

Belongs to the peptidase T1B family. In terms of assembly, the 20S proteasome core is composed of 14 alpha and 14 beta subunits that assemble into four stacked heptameric rings, resulting in a barrel-shaped structure. The two inner rings, each composed of seven catalytic beta subunits, are sandwiched by two outer rings, each composed of seven alpha subunits. The catalytic chamber with the active sites is on the inside of the barrel. Has a gated structure, the ends of the cylinder being occluded by the N-termini of the alpha-subunits. Is capped by the proteasome-associated ATPase, ARC.

Its subcellular location is the cytoplasm. It catalyses the reaction Cleavage of peptide bonds with very broad specificity.. It participates in protein degradation; proteasomal Pup-dependent pathway. The formation of the proteasomal ATPase ARC-20S proteasome complex, likely via the docking of the C-termini of ARC into the intersubunit pockets in the alpha-rings, may trigger opening of the gate for substrate entry. Interconversion between the open-gate and close-gate conformations leads to a dynamic regulation of the 20S proteasome proteolysis activity. In terms of biological role, component of the proteasome core, a large protease complex with broad specificity involved in protein degradation. The polypeptide is Proteasome subunit beta (Xylanimonas cellulosilytica (strain DSM 15894 / JCM 12276 / CECT 5975 / KCTC 9989 / LMG 20990 / NBRC 107835 / XIL07)).